Reading from the N-terminus, the 130-residue chain is Small ribosomal subunit protein uS9 (130 aa).

The segment at 109–130 (RMKERKKYGLKGARRAPQFSKR) is disordered. Over residues 111 to 130 (KERKKYGLKGARRAPQFSKR) the composition is skewed to basic residues.

This sequence belongs to the universal ribosomal protein uS9 family.

The sequence is that of Small ribosomal subunit protein uS9 from Listeria innocua serovar 6a (strain ATCC BAA-680 / CLIP 11262).